Consider the following 239-residue polypeptide: O-antigen export system ATP-binding protein RfbE (239 aa).

In terms of domain architecture, ABC transporter spans 28–239; it reads VRVSTGGRIG…LIYEESMDIL (212 aa). 66–73 contacts ATP; the sequence is GHNGAGKS.

Belongs to the ABC transporter superfamily.

The protein localises to the cell inner membrane. May form an ATP-driven O-antigen export apparatus, in association with RfbD. This Yersinia enterocolitica protein is O-antigen export system ATP-binding protein RfbE (rfbE).